Reading from the N-terminus, the 197-residue chain is Ribonuclease HII (197 aa).

The region spanning histidine 11 to leucine 197 is the RNase H type-2 domain. Residues aspartate 17, glutamate 18, and aspartate 109 each coordinate a divalent metal cation.

It belongs to the RNase HII family. Mn(2+) is required as a cofactor. The cofactor is Mg(2+).

Its subcellular location is the cytoplasm. The catalysed reaction is Endonucleolytic cleavage to 5'-phosphomonoester.. Its function is as follows. Endonuclease that specifically degrades the RNA of RNA-DNA hybrids. The chain is Ribonuclease HII from Actinobacillus pleuropneumoniae serotype 5b (strain L20).